We begin with the raw amino-acid sequence, 389 residues long: Succinate--CoA ligase [ADP-forming] subunit beta (389 aa).

The 236-residue stretch at K9 to R244 folds into the ATP-grasp domain. Residues K46, G53 to G55, E99, T102, and E107 contribute to the ATP site. Mg(2+)-binding residues include N199 and D213. Substrate is bound by residues N264 and G321 to V323.

It belongs to the succinate/malate CoA ligase beta subunit family. In terms of assembly, heterotetramer of two alpha and two beta subunits. It depends on Mg(2+) as a cofactor.

The enzyme catalyses succinate + ATP + CoA = succinyl-CoA + ADP + phosphate. The catalysed reaction is GTP + succinate + CoA = succinyl-CoA + GDP + phosphate. It participates in carbohydrate metabolism; tricarboxylic acid cycle; succinate from succinyl-CoA (ligase route): step 1/1. Its function is as follows. Succinyl-CoA synthetase functions in the citric acid cycle (TCA), coupling the hydrolysis of succinyl-CoA to the synthesis of either ATP or GTP and thus represents the only step of substrate-level phosphorylation in the TCA. The beta subunit provides nucleotide specificity of the enzyme and binds the substrate succinate, while the binding sites for coenzyme A and phosphate are found in the alpha subunit. This Alcanivorax borkumensis (strain ATCC 700651 / DSM 11573 / NCIMB 13689 / SK2) protein is Succinate--CoA ligase [ADP-forming] subunit beta.